We begin with the raw amino-acid sequence, 181 residues long: 3-hydroxyacyl-[acyl-carrier-protein] dehydratase FabZ (181 aa).

H54 is an active-site residue.

Belongs to the thioester dehydratase family. FabZ subfamily.

It localises to the cytoplasm. It catalyses the reaction a (3R)-hydroxyacyl-[ACP] = a (2E)-enoyl-[ACP] + H2O. Involved in unsaturated fatty acids biosynthesis. Catalyzes the dehydration of short chain beta-hydroxyacyl-ACPs and long chain saturated and unsaturated beta-hydroxyacyl-ACPs. The sequence is that of 3-hydroxyacyl-[acyl-carrier-protein] dehydratase FabZ from Yersinia pestis.